A 1872-amino-acid polypeptide reads, in one-letter code: Chitin synthase 6 (1872 aa).

The tract at residues 1–23 (MAQHLPPVGGNGGAHTQPSLPAL) is disordered. Residues 1-779 (MAQHLPPVGG…CWMEIAQLSD (779 aa)) enclose the Myosin motor domain. An ATP-binding site is contributed by 104–111 (GESGSGKT). 4 N-linked (GlcNAc...) asparagine glycosylation sites follow: asparagine 123, asparagine 291, asparagine 428, and asparagine 559. A disordered region spans residues 587–652 (VMQASVSSKP…VNKPSEEGAS (66 aa)). The tract at residues 659–683 (LDNVTKSFHAQNTNAYFVFCLKPND) is actin-binding. An N-linked (GlcNAc...) asparagine glycan is attached at asparagine 661. 2 consecutive transmembrane segments (helical) span residues 881–901 (WVFITWMLTFFVPEFLIQHLG) and 920–940 (FIIWFSCLAAAFILVVFPMLV). Positions 944–1003 (QYVFTGEELSAYNGKDGKASYAAIRGQVFDIGSFIPRHPLPYLPSKLFTQYAGTDITGLF) constitute a Cytochrome b5 heme-binding domain. 3 N-linked (GlcNAc...) asparagine glycosylation sites follow: asparagine 1030, asparagine 1055, and asparagine 1120. A helical transmembrane segment spans residues 1193–1213 (FILAVTIILCSIIAFKFLAAL). Asparagine 1450 and asparagine 1556 each carry an N-linked (GlcNAc...) asparagine glycan. The next 3 helical transmembrane spans lie at 1581–1601 (FIVFIDLLSTIIQPVTIAYIV), 1614–1634 (VPVLAFVLLAAVYGLQAIIFI), and 1641–1661 (MIAWMILYIIAMPIFSFGLPL). One can recognise a DEK-C domain in the interval 1814-1869 (LPSDDALLAEIREILRTADLMTVTKKGVKQELERRFGVNLDSRRAYINSATEALLS).

The protein belongs to the chitin synthase family. Class V subfamily.

The protein localises to the cell membrane. The catalysed reaction is [(1-&gt;4)-N-acetyl-beta-D-glucosaminyl](n) + UDP-N-acetyl-alpha-D-glucosamine = [(1-&gt;4)-N-acetyl-beta-D-glucosaminyl](n+1) + UDP + H(+). Polymerizes chitin, a structural polymer of the cell wall and septum, by transferring the sugar moiety of UDP-GlcNAc to the non-reducing end of the growing chitin polymer. Required for appressorium penetration and invasive growth. This is Chitin synthase 6 from Pyricularia oryzae (strain 70-15 / ATCC MYA-4617 / FGSC 8958) (Rice blast fungus).